Reading from the N-terminus, the 262-residue chain is Probable carboxylesterase SOBER1-like (262 aa).

Catalysis depends on charge relay system residues serine 151, aspartate 205, and histidine 237.

The protein belongs to the AB hydrolase superfamily. AB hydrolase 2 family.

In terms of biological role, carboxylesterase. This chain is Probable carboxylesterase SOBER1-like, found in Arabidopsis thaliana (Mouse-ear cress).